Here is a 1317-residue protein sequence, read N- to C-terminus: Nucleoporin NUP145 (1317 aa).

Over residues 1 to 16 (MFNKSVNSGFTFGNQN) the composition is skewed to polar residues. The interval 1 to 36 (MFNKSVNSGFTFGNQNTSTPTSTPAQPSSSLQFPQK) is disordered. An FG 1 repeat occupies 12–13 (FG). Positions 17-30 (TSTPTSTPAQPSSS) are enriched in low complexity. One copy of the GLFG 1 repeat lies at 39-42 (GLFG). The stretch at 79 to 80 (FG) is one FG 2 repeat. The GLFG 2 repeat unit spans residues 89-92 (GLFG). The FG 3 repeat unit spans residues 106–107 (FG). The interval 133-165 (QNGGLFGNSNNNNITSTTQNGGLFGKPTTTPAG) is disordered. GLFG repeat units follow at residues 136–139 (GLFG), 154–157 (GLFG), 168–171 (GLFG), and 181–184 (GLFG). The segment covering 139–164 (GNSNNNNITSTTQNGGLFGKPTTTPA) has biased composition (low complexity). The GLFG 7; approximate repeat unit spans residues 193 to 196 (GIFG). Residues 206–209 (GLFG) form a GLFG 8 repeat. Positions 249-278 (TSSLSDVNGKSDAEPKPIENRRTYSFSSSV) are disordered. Positions 257 to 270 (GKSDAEPKPIENRR) are enriched in basic and acidic residues. Serine 273 carries the post-translational modification Phosphoserine. A Bipartite nuclear localization signal motif is present at residues 369 to 385 (RKLKIDSNRSAAKKLKL). The tract at residues 390–450 (PAITKKHMQD…NLNKQDGENT (61 aa)) is disordered. The tract at residues 398 to 523 (QDEQDSSENE…FGKIVIFRSS (126 aa)) is required for autocatalytic cleavage. Residues serine 403, serine 404, and serine 414 each carry the phosphoserine modification. Basic and acidic residues predominate over residues 418 to 427 (IDRKENRDNN). The segment covering 428 to 444 (LDNTYLNGKEQSNNLNK) has biased composition (polar residues). Residues 458–605 (SFGYWCSPSP…GTWTFKVNHF (148 aa)) enclose the Peptidase S59 domain. Residues 460-604 (GYWCSPSPEQ…GGTWTFKVNH (145 aa)) form a nucleoporin RNA-binding motif (NRM) region. Phosphoserine occurs at positions 667, 679, and 689. Threonine 751 bears the Phosphothreonine mark.

This sequence belongs to the nucleoporin GLFG family. In terms of assembly, component of the nuclear pore complex (NPC). NPC constitutes the exclusive means of nucleocytoplasmic transport. NPCs allow the passive diffusion of ions and small molecules and the active, nuclear transport receptor-mediated bidirectional transport of macromolecules such as proteins, RNAs, ribonucleoparticles (RNPs), and ribosomal subunits across the nuclear envelope. Due to its 8-fold rotational symmetry, all subunits are present with 8 copies or multiples thereof. NUP145C is part of the heptameric 0.5 MDa autoassembling NUP84 NPC subcomplex (NUP84, NUP85, NUP120, NUP133, NUP145C, SEC13 and SEH1). NUP145N may bind homomeric RNA and interacts through its FG repeats with karyopherins. Interacts with MLP1 and MLP2. Post-translationally, NUP145 is autocatalytically cleaved in NUP145N and NUP145C.

It is found in the nucleus. The protein localises to the nuclear pore complex. It localises to the nucleus membrane. Functionally, functions as a component of the nuclear pore complex (NPC). NPC components, collectively referred to as nucleoporins (NUPs), can play the role of both NPC structural components and of docking or interaction partners for transiently associated nuclear transport factors. Active directional transport is assured by both, a Phe-Gly (FG) repeat affinity gradient for these transport factors across the NPC and a transport cofactor concentration gradient across the nuclear envelope (GSP1 and GSP2 GTPases associated predominantly with GTP in the nucleus, with GDP in the cytoplasm). NUP145 is autocatalytically cleaved in vivo in 2 polypeptides which assume different functions in the NPC. NUP145N as one of the FG repeat nucleoporins participates in karyopherin interactions and contains part of the autocatalytic cleavage activity. NUP145C as part of the NUP84 complex is involved in nuclear poly(A)+ RNA and tRNA export. It is also required for normal NPC distribution (probably through interactions with MLP1 and MLP2) and NPC assembly, as well as for normal nuclear envelope organization. The chain is Nucleoporin NUP145 (NUP145) from Saccharomyces cerevisiae (strain ATCC 204508 / S288c) (Baker's yeast).